A 500-amino-acid polypeptide reads, in one-letter code: NAD(P)H-quinone oxidoreductase chain 4, chloroplastic (500 aa).

A run of 14 helical transmembrane segments spans residues 4–24 (FPWLTILVVLPIFAGSLIFFL), 35–55 (YTIAICLLEFLIMTYAFCYHF), 87–107 (LGSILLTGFITTLATLAAWPV), 111–131 (SQLFYFLMLAMYSGQIGLFSS), 134–154 (LLLFFIMWELELIPVYLLLSM), 167–187 (FILYTAGGSIFFLIGVLGMGL), 211–231 (ILLYFGFLIAYAVKLPIIPLH), 242–262 (HYSTCMLLAGILLKMGAYGLI), 274–294 (YLFSPWLVIIGAVQIIYAALT), 313–333 (MGFIIIGIGSITNIGLNGAIL), 334–354 (QILSHGFIGATLFFLAGTACD), 386–406 (LALPGMSGFVAELVVFFGLIT), 417–437 (LITFVMAIGMILTPIYLLSML), and 462–482 (LFLLICIFLPVIGIGIYPDFV).

This sequence belongs to the complex I subunit 4 family.

Its subcellular location is the plastid. The protein localises to the chloroplast thylakoid membrane. The enzyme catalyses a plastoquinone + NADH + (n+1) H(+)(in) = a plastoquinol + NAD(+) + n H(+)(out). It carries out the reaction a plastoquinone + NADPH + (n+1) H(+)(in) = a plastoquinol + NADP(+) + n H(+)(out). In Saccharum hybrid (Sugarcane), this protein is NAD(P)H-quinone oxidoreductase chain 4, chloroplastic.